Reading from the N-terminus, the 69-residue chain is Probable rubredoxin HupI (69 aa).

The Rubredoxin-like domain maps to 16–67 (VTRLECGICWTVYDPADGDDVAQIAPGTPFAALPEEWHCPNCDAPKSKFMAI). Cys-21, Cys-24, Cys-54, and Cys-57 together coordinate Fe cation.

This sequence belongs to the rubredoxin family. It depends on Fe(3+) as a cofactor.

Could be an electron transport intermediate in hydrogen oxidation. The sequence is that of Probable rubredoxin HupI (hupI) from Bradyrhizobium diazoefficiens (strain JCM 10833 / BCRC 13528 / IAM 13628 / NBRC 14792 / USDA 110).